The primary structure comprises 161 residues: Nucleotide-binding protein Veis_3464 (161 aa).

It belongs to the YajQ family.

Nucleotide-binding protein. The sequence is that of Nucleotide-binding protein Veis_3464 from Verminephrobacter eiseniae (strain EF01-2).